A 192-amino-acid polypeptide reads, in one-letter code: Ion-translocating oxidoreductase complex subunit A (192 aa).

6 helical membrane-spanning segments follow: residues 5–25 (LLLLISTVLVNNFVLVKFLGL), 39–59 (IGMSMATTFVLTLASILSYLV), 65–85 (LPFDLSYLRTMSFILVIAVVV), 102–122 (ALGIYLPLITTNCAVLGVALL), 134–154 (AIYGFGAALGFSLVLILFSAM), and 171–191 (AIAMITAGLMSLAFMGFTGLV).

It belongs to the NqrDE/RnfAE family. As to quaternary structure, the complex is composed of six subunits: RnfA, RnfB, RnfC, RnfD, RnfE and RnfG.

The protein localises to the cell inner membrane. Functionally, part of a membrane-bound complex that couples electron transfer with translocation of ions across the membrane. This Shewanella baltica (strain OS185) protein is Ion-translocating oxidoreductase complex subunit A.